The chain runs to 133 residues: ATP synthase epsilon chain (133 aa).

This sequence belongs to the ATPase epsilon chain family. F-type ATPases have 2 components, CF(1) - the catalytic core - and CF(0) - the membrane proton channel. CF(1) has five subunits: alpha(3), beta(3), gamma(1), delta(1), epsilon(1). CF(0) has three main subunits: a, b and c.

The protein localises to the cell membrane. In terms of biological role, produces ATP from ADP in the presence of a proton gradient across the membrane. The protein is ATP synthase epsilon chain of Clostridium botulinum (strain ATCC 19397 / Type A).